The following is a 336-amino-acid chain: Heat-inducible transcription repressor HrcA (336 aa).

The protein belongs to the HrcA family.

Functionally, negative regulator of class I heat shock genes (grpE-dnaK-dnaJ and groELS operons). Prevents heat-shock induction of these operons. This Variovorax paradoxus (strain S110) protein is Heat-inducible transcription repressor HrcA.